A 253-amino-acid chain; its full sequence is Ribosomal RNA small subunit methyltransferase J (253 aa).

S-adenosyl-L-methionine-binding positions include 101–102, 117–118, and aspartate 169; these read RD and ER.

Belongs to the methyltransferase superfamily. RsmJ family.

The protein localises to the cytoplasm. It catalyses the reaction guanosine(1516) in 16S rRNA + S-adenosyl-L-methionine = N(2)-methylguanosine(1516) in 16S rRNA + S-adenosyl-L-homocysteine + H(+). Functionally, specifically methylates the guanosine in position 1516 of 16S rRNA. The chain is Ribosomal RNA small subunit methyltransferase J from Psychromonas ingrahamii (strain DSM 17664 / CCUG 51855 / 37).